A 320-amino-acid polypeptide reads, in one-letter code: ATP-dependent 6-phosphofructokinase (320 aa).

ATP is bound at residue glycine 11. Residue 21–25 (RAVTK) coordinates ADP. ATP-binding positions include 72–73 (RF) and 102–105 (GDGS). Aspartate 103 lines the Mg(2+) pocket. 125-127 (TID) serves as a coordination point for substrate. Residue aspartate 127 is the Proton acceptor of the active site. Residue arginine 154 participates in ADP binding. Residues arginine 162 and 169-171 (MGR) each bind substrate. ADP contacts are provided by residues 185 to 187 (GAD) and 213 to 215 (KDH). Residues glutamate 222, arginine 243, and 249–252 (HMQR) each bind substrate.

It belongs to the phosphofructokinase type A (PFKA) family. ATP-dependent PFK group I subfamily. Prokaryotic clade 'B1' sub-subfamily. As to quaternary structure, homotetramer. Mg(2+) is required as a cofactor.

Its subcellular location is the cytoplasm. The enzyme catalyses beta-D-fructose 6-phosphate + ATP = beta-D-fructose 1,6-bisphosphate + ADP + H(+). The protein operates within carbohydrate degradation; glycolysis; D-glyceraldehyde 3-phosphate and glycerone phosphate from D-glucose: step 3/4. With respect to regulation, allosterically activated by ADP and other diphosphonucleosides, and allosterically inhibited by phosphoenolpyruvate. Catalyzes the phosphorylation of D-fructose 6-phosphate to fructose 1,6-bisphosphate by ATP, the first committing step of glycolysis. The protein is ATP-dependent 6-phosphofructokinase of Lactobacillus acidophilus (strain ATCC 700396 / NCK56 / N2 / NCFM).